Here is a 406-residue protein sequence, read N- to C-terminus: Imidazolonepropionase (406 aa).

2 residues coordinate Fe(3+): His72 and His74. 2 residues coordinate Zn(2+): His72 and His74. Positions 81, 144, and 177 each coordinate 4-imidazolone-5-propanoate. Tyr144 is an N-formimidoyl-L-glutamate binding site. His242 lines the Fe(3+) pocket. His242 is a binding site for Zn(2+). Gln245 serves as a coordination point for 4-imidazolone-5-propanoate. Asp317 is a Fe(3+) binding site. Residue Asp317 coordinates Zn(2+). Residues Asn319 and Gly321 each contribute to the N-formimidoyl-L-glutamate site. 4-imidazolone-5-propanoate is bound at residue Thr322.

Belongs to the metallo-dependent hydrolases superfamily. HutI family. Zn(2+) serves as cofactor. The cofactor is Fe(3+).

Its subcellular location is the cytoplasm. It catalyses the reaction 4-imidazolone-5-propanoate + H2O = N-formimidoyl-L-glutamate. The protein operates within amino-acid degradation; L-histidine degradation into L-glutamate; N-formimidoyl-L-glutamate from L-histidine: step 3/3. Catalyzes the hydrolytic cleavage of the carbon-nitrogen bond in imidazolone-5-propanoate to yield N-formimidoyl-L-glutamate. It is the third step in the universal histidine degradation pathway. This Yersinia pestis bv. Antiqua (strain Antiqua) protein is Imidazolonepropionase.